The primary structure comprises 694 residues: Polyribonucleotide nucleotidyltransferase (694 aa).

Residues Asp-486 and Asp-492 each contribute to the Mg(2+) site. Residues 553-612 form the KH domain; the sequence is PRIETMQIKPTKIASVIGPGGKQIRQIIEETGVQIDVNDLGVVSISASSASAINKAKEII. In terms of domain architecture, S1 motif spans 622-690; sequence GKTYRGRVTS…EKGQLKLSHK (69 aa).

The protein belongs to the polyribonucleotide nucleotidyltransferase family. Mg(2+) is required as a cofactor.

It localises to the cytoplasm. It carries out the reaction RNA(n+1) + phosphate = RNA(n) + a ribonucleoside 5'-diphosphate. Functionally, involved in mRNA degradation. Catalyzes the phosphorolysis of single-stranded polyribonucleotides processively in the 3'- to 5'-direction. This chain is Polyribonucleotide nucleotidyltransferase, found in Chlamydia pneumoniae (Chlamydophila pneumoniae).